A 777-amino-acid chain; its full sequence is MIISRQLPSFCLAALFLSFSGGAHALAQPEQTRAEIRRTSFGVPHIRADDERGLGYGIGYAYAQDNLCLMANEVLTVNAQRSQYFGAEGQTLEQRDNLSSDLFFSWLNTPQAVAAFWQAQTPAMRERMQGYVEGYNRQLAERQVQGLPEQCRGDWVRPLATSDLVKLTRRLLVEGGAGQFAEALAGATPPGATAQAGLPAEHWQLAAARQQRFALDRGSNAVAIGSERSFNGRGLLLANPHFPWVGGMRFYQMHLTIPGQLDVMGAALPGLPLINIGFNQHLAWTHTVDASKHFTLYRLQLDPKDPTRYLLDGRSLPLERQTLTVQSKGPDGQLQPRTRTLYSSVFGPIVQWPGELDWDHQYAYSLRDANLDNSRVLAQWYAMNQASSVAGLQDSVHQLQGIPWVNTLAVDDQGRALYMNQSVVPNVTQAKLAQCSDPRAGTRVIVLDGSRSACAWDIDPAAAQPGIFAASQLPQLARNDYLQHSNDSAWMVNPAAPLQGFSPVISEQDVPLKMRARFALDRLSRMHKAQVSDLQHLVTDDQVYLAGQVMPDLLQFCEQDLGADAQRLGPVCASLKAWDRSAGLQAGLGFVHFQGIMQPLLQDPSVWRVAFDPKDPQHTPRGLAIGRPAVARALRESMLASAQQVAEAGLGSDVRWGDIQQVSQGGQPTPVPGGPESLGVYNAIQSVPAADGKREVVSGTSYLNVVSFDEQGPRALGLLAFSLSSDPASAHFRDQTAAFARNQWSVLPFTEAQIRADGQYQLQVIEEPRKGAVLARQ.

Residues 1–25 (MIISRQLPSFCLAALFLSFSGGAHA) form the signal peptide. A propeptide spans 196 to 218 (AGLPAEHWQLAAARQQRFALDRG) (spacer peptide). Ser-219 acts as the Nucleophile in catalysis.

It belongs to the peptidase S45 family. As to quaternary structure, heterodimer of an alpha subunit and a beta subunit processed from the same precursor.

It is found in the periplasm. It catalyses the reaction an N-acyl-L-homoserine lactone + H2O = L-homoserine lactone + a carboxylate. Functionally, catalyzes the deacylation of acyl-homoserine lactone (AHL or acyl-HSL), releasing homoserine lactone (HSL) and the corresponding fatty acid. Possesses a specificity for the degradation of long-chain acyl-HSLs (side chains of 11 to 14 carbons in length). In Pseudomonas fluorescens (strain ATCC BAA-477 / NRRL B-23932 / Pf-5), this protein is Acyl-homoserine lactone acylase PvdQ (pvdQ).